We begin with the raw amino-acid sequence, 241 residues long: Ureidoacrylate amidohydrolase RutB (241 aa).

Catalysis depends on Asp-38, which acts as the Proton acceptor. Residue Lys-147 is part of the active site. Cys-180 (nucleophile) is an active-site residue.

The protein belongs to the isochorismatase family. RutB subfamily.

The enzyme catalyses (Z)-3-ureidoacrylate + H2O + H(+) = (Z)-3-aminoacrylate + NH4(+) + CO2. It carries out the reaction (Z)-3-ureidoacrylate + H2O = (Z)-3-aminoacrylate + carbamate + H(+). It catalyses the reaction (Z)-2-methylureidoacrylate + H2O + H(+) = (Z)-2-methylaminoacrylate + NH4(+) + CO2. Functionally, hydrolyzes ureidoacrylate to form aminoacrylate and carbamate. The carbamate hydrolyzes spontaneously, thereby releasing one of the nitrogen atoms of the pyrimidine ring as ammonia and one of its carbon atoms as CO2. This chain is Ureidoacrylate amidohydrolase RutB, found in Haliangium ochraceum (strain DSM 14365 / JCM 11303 / SMP-2).